A 249-amino-acid chain; its full sequence is Metallo-beta-lactamase type 2 (249 aa).

A signal peptide spans 1 to 22 (MLKKIKISLILALGLTSLQAFG). Zn(2+) is bound by residues histidine 98, histidine 100, aspartate 102, histidine 161, and cysteine 180. Residue lysine 183 coordinates substrate. Histidine 222 lines the Zn(2+) pocket.

The protein belongs to the metallo-beta-lactamase superfamily. Class-B beta-lactamase family. As to quaternary structure, monomer. Requires Zn(2+) as cofactor.

It is found in the periplasm. The catalysed reaction is a beta-lactam + H2O = a substituted beta-amino acid. Confers resistance to the different beta-lactams antibiotics (penicillin, cephalosporin and carbapenem) via the hydrolysis of the beta-lactam ring. In Elizabethkingia meningoseptica (Chryseobacterium meningosepticum), this protein is Metallo-beta-lactamase type 2 (blaB2).